Reading from the N-terminus, the 303-residue chain is Ribosomal RNA small subunit methyltransferase H (303 aa).

S-adenosyl-L-methionine is bound by residues 32 to 34, Asp-52, Phe-78, Asp-99, and Gln-106; that span reads GGH.

This sequence belongs to the methyltransferase superfamily. RsmH family.

It localises to the cytoplasm. The catalysed reaction is cytidine(1402) in 16S rRNA + S-adenosyl-L-methionine = N(4)-methylcytidine(1402) in 16S rRNA + S-adenosyl-L-homocysteine + H(+). Functionally, specifically methylates the N4 position of cytidine in position 1402 (C1402) of 16S rRNA. The protein is Ribosomal RNA small subunit methyltransferase H of Acinetobacter baylyi (strain ATCC 33305 / BD413 / ADP1).